Here is a 478-residue protein sequence, read N- to C-terminus: Vitronectin (478 aa).

Positions 1-19 (MAPLRPFFILALVAWVSLA) are cleaved as a signal peptide. The SMB domain maps to 20–63 (DQESCKGRCTQGFMASKKCQCDELCTYYQSCCADYMEQCKPQVT). 7 disulfide bridges follow: C24/C28, C24/C40, C28/C58, C38/C40, C38/C51, C44/C50, and C51/C58. The Cell attachment site signature appears at 64–66 (RGD). At T69 the chain carries Phosphothreonine. A sulfotyrosine mark is found at Y75, Y78, and Y80. The segment at 82–153 (EEPKNNTNTG…QGTPEFPEEE (72 aa)) is disordered. N86 is a glycosylation site (N-linked (GlcNAc...) asparagine). Residues 86-99 (NNTNTGVQPENTSP) show a composition bias toward polar residues. A compositionally biased stretch (basic and acidic residues) spans 131–141 (EQQEEILRPDT). Hemopexin repeat units follow at residues 157-201 (GKPF…VWGI), 202-249 (EGPI…FSGI), and 250-304 (PDNV…FEHF). Residues N168 and N241 are each glycosylated (N-linked (GlcNAc...) asparagine). A sulfotyrosine mark is found at Y278 and Y281. Residues C292 and C431 are joined by a disulfide bond. Phosphoserine occurs at positions 311 and 362. The tract at residues 359–395 (LSHSAQAKKQKSKRRSRKRYRSRRGRGHRRSQSSNSR) is disordered. Residues 364 to 389 (QAKKQKSKRRSRKRYRSRRGRGHRRS) show a composition bias toward basic residues. The interval 366-399 (KKQKSKRRSRKRYRSRRGRGHRRSQSSNSRRSSR) is heparin-binding. S398 carries the post-translational modification Phosphoserine; by PKA. 3 positions are modified to sulfotyrosine: Y416, Y419, and Y421. Residues 420–473 (DYDMDWLVPATCEPIQSVYFFSGDKYYRVNLRTRRVDSVNPPYPRSIAQYWLGC) form a Hemopexin 4 repeat.

In terms of assembly, interacts with SERPINE1/PAI1, insulin and C1QBP. Sulfated on tyrosine residues. In terms of processing, N- and O-glycosylated. Post-translationally, it has been suggested that the active SMB domain may be permitted considerable disulfide bond heterogeneity or variability, thus two alternate disulfide patterns based on 3D structures are described with 1 disulfide bond conserved in both. As to expression, plasma.

Its subcellular location is the secreted. The protein resides in the extracellular space. In terms of biological role, vitronectin is a cell adhesion and spreading factor found in serum and tissues. Vitronectin interact with glycosaminoglycans and proteoglycans. Is recognized by certain members of the integrin family and serves as a cell-to-substrate adhesion molecule. Inhibitor of the membrane-damaging effect of the terminal cytolytic complement pathway. The polypeptide is Vitronectin (Vtn) (Mus musculus (Mouse)).